A 600-amino-acid polypeptide reads, in one-letter code: DNA repair and recombination protein mus-11 (600 aa).

A DNA-binding region spans residues 148 to 152 (KRALR). Residues 268-319 (LNPQAQQSRPLSRSGSTGSLNTRQQPQNSHQFTARAQSRPPQQQLNSNQSRP) show a composition bias toward polar residues. Disordered stretches follow at residues 268–357 (LNPQ…AGAA) and 387–600 (APKP…QRLA). Composition is skewed to low complexity over residues 325 to 343 (NNSS…TTPQ) and 458 to 470 (ARSA…RAGP). The span at 502 to 512 (GFSSSPSTNRG) shows a compositional bias: polar residues. Low complexity-rich tracts occupy residues 540 to 564 (SATT…APSA) and 577 to 591 (ANAS…ATSG).

It belongs to the RAD52 family. Part of a complex that includes mei-3/rad51 and mus-11/rad52.

It is found in the nucleus. Involved in DNA double-strand break (DSB) repair and recombination. Promotes the annealing of complementary single-stranded DNA and by stimulation of the mei-3/rad51 recombinase. The protein is DNA repair and recombination protein mus-11 (mus-11) of Neurospora crassa (strain ATCC 24698 / 74-OR23-1A / CBS 708.71 / DSM 1257 / FGSC 987).